We begin with the raw amino-acid sequence, 311 residues long: Olfactory receptor 52J3 (311 aa).

The Extracellular portion of the chain corresponds to Met-1–Met-27. The N-linked (GlcNAc...) asparagine glycan is linked to Asn-5. Residues Trp-28–Leu-48 form a helical membrane-spanning segment. The Cytoplasmic segment spans residues Leu-49–Thr-56. Residues Leu-57–Thr-77 traverse the membrane as a helical segment. Residues Thr-78–Ala-101 are Extracellular-facing. Cys-99 and Cys-191 are joined by a disulfide. The chain crosses the membrane as a helical span at residues Gln-102–Phe-122. The Cytoplasmic portion of the chain corresponds to Asp-123 to Gln-141. A helical transmembrane segment spans residues Val-142–Val-162. The Extracellular segment spans residues Tyr-163–Gly-198. A helical transmembrane segment spans residues Ile-199–Ser-218. Topologically, residues Tyr-219 to Ala-238 are cytoplasmic. The helical transmembrane segment at Leu-239 to Ser-259 threads the bilayer. The Extracellular portion of the chain corresponds to Phe-260–His-274. A helical transmembrane segment spans residues Ile-275–Val-295. Topologically, residues Arg-296–Lys-311 are cytoplasmic.

The protein belongs to the G-protein coupled receptor 1 family.

Its subcellular location is the cell membrane. In terms of biological role, odorant receptor. This is Olfactory receptor 52J3 (OR52J3) from Homo sapiens (Human).